The chain runs to 367 residues: Peptide chain release factor 2 (367 aa).

Position 254 is an N5-methylglutamine (Q254).

It belongs to the prokaryotic/mitochondrial release factor family. Methylated by PrmC. Methylation increases the termination efficiency of RF2.

The protein resides in the cytoplasm. In terms of biological role, peptide chain release factor 2 directs the termination of translation in response to the peptide chain termination codons UGA and UAA. The polypeptide is Peptide chain release factor 2 (Burkholderia cenocepacia (strain ATCC BAA-245 / DSM 16553 / LMG 16656 / NCTC 13227 / J2315 / CF5610) (Burkholderia cepacia (strain J2315))).